The chain runs to 310 residues: Methionyl-tRNA formyltransferase (310 aa).

109-112 (SLLP) is a (6S)-5,6,7,8-tetrahydrofolate binding site.

Belongs to the Fmt family.

The enzyme catalyses L-methionyl-tRNA(fMet) + (6R)-10-formyltetrahydrofolate = N-formyl-L-methionyl-tRNA(fMet) + (6S)-5,6,7,8-tetrahydrofolate + H(+). In terms of biological role, attaches a formyl group to the free amino group of methionyl-tRNA(fMet). The formyl group appears to play a dual role in the initiator identity of N-formylmethionyl-tRNA by promoting its recognition by IF2 and preventing the misappropriation of this tRNA by the elongation apparatus. In Parvibaculum lavamentivorans (strain DS-1 / DSM 13023 / NCIMB 13966), this protein is Methionyl-tRNA formyltransferase.